The following is a 101-amino-acid chain: Urease subunit beta (101 aa).

This sequence belongs to the urease beta subunit family. As to quaternary structure, heterotrimer of UreA (gamma), UreB (beta) and UreC (alpha) subunits. Three heterotrimers associate to form the active enzyme.

It localises to the cytoplasm. The enzyme catalyses urea + 2 H2O + H(+) = hydrogencarbonate + 2 NH4(+). The protein operates within nitrogen metabolism; urea degradation; CO(2) and NH(3) from urea (urease route): step 1/1. This Dinoroseobacter shibae (strain DSM 16493 / NCIMB 14021 / DFL 12) protein is Urease subunit beta.